The following is a 195-amino-acid chain: Pyruvoyl-dependent arginine decarboxylase AaxB (195 aa).

Ser53 is subject to Pyruvic acid (Ser).

Belongs to the pyruvoyl-dependent arginine decarboxylase family. Trimer of an alpha-beta dimer. Pyruvate serves as cofactor.

Its subcellular location is the cytoplasm. The enzyme catalyses L-arginine + H(+) = agmatine + CO2. Its function is as follows. Part of the AaxABC system, catalyzes the decarboxylation of L-arginine. The arginine uptake by the bacterium in the macrophage may be a virulence factor against the host innate immune response. In Chlamydia muridarum (strain MoPn / Nigg), this protein is Pyruvoyl-dependent arginine decarboxylase AaxB (aaxB).